The primary structure comprises 993 residues: Replication protein 1a (993 aa).

Residues 50-408 (RNALDVKDSE…TIVINGMAMQ (359 aa)) are methyltransferase. The region spanning 72–289 (HLTQQEQAPH…HKWENVKSFL (218 aa)) is the Alphavirus-like MT domain. The tract at residues 525–581 (AEDRKQKAEAASQIPVDEIPDDTAESSDDTPREADTNQKSEPSSPELETLSTQTRSP) is disordered. Acidic residues predominate over residues 542–552 (EIPDDTAESSD). A compositionally biased stretch (basic and acidic residues) spans 553 to 562 (DTPREADTNQ). Residues 564 to 576 (SEPSSPELETLST) show a composition bias toward low complexity. The region spanning 682 to 838 (IVNADCVISN…TIIPDETDTA (157 aa)) is the (+)RNA virus helicase ATP-binding domain. The interval 711–975 (LVDGVAGCGK…VTRHKKTFRY (265 aa)) is ATP-dependent helicase. 714–721 (GVAGCGKT) serves as a coordination point for ATP. The (+)RNA virus helicase C-terminal domain occupies 839-993 (DTTFRSPQDV…DLIAECLARV (155 aa)).

Belongs to the bromoviridae replication protein 1a family. As to quaternary structure, interacts with RNA-directed RNA polymerase 2a.

It localises to the host endoplasmic reticulum membrane. Involved in the virus replication. Contains a helicase domain and a methyltransferase domain. The methyltransferase domain is probably involved in viral RNA capping. Involved in the formation of ER membrane spherular invaginations in which RNA replication complexes form. This chain is Replication protein 1a, found in Canna (Florist's daisy).